The chain runs to 317 residues: NAD kinase (317 aa).

Residue D82 is the Proton acceptor of the active site. Residues D82–G83, R87, N157–E158, D187, and T198–S203 each bind NAD(+).

Belongs to the NAD kinase family. Requires a divalent metal cation as cofactor.

Its subcellular location is the cytoplasm. The enzyme catalyses NAD(+) + ATP = ADP + NADP(+) + H(+). In terms of biological role, involved in the regulation of the intracellular balance of NAD and NADP, and is a key enzyme in the biosynthesis of NADP. Catalyzes specifically the phosphorylation on 2'-hydroxyl of the adenosine moiety of NAD to yield NADP. This chain is NAD kinase, found in Corynebacterium diphtheriae (strain ATCC 700971 / NCTC 13129 / Biotype gravis).